The following is a 691-amino-acid chain: Guanylate cyclase soluble subunit alpha-1 (691 aa).

S267 is modified (phosphoserine). One can recognise a Guanylate cyclase domain in the interval 480 to 607 (VTMLFSDIVG…GNNVTLANKF (128 aa)).

It belongs to the adenylyl cyclase class-4/guanylyl cyclase family. The active enzyme is formed by a heterodimer of an alpha and a beta subunit. Heterodimer with GUCY1B1. Mg(2+) is required as a cofactor. Mn(2+) serves as cofactor.

The protein resides in the cytoplasm. The enzyme catalyses GTP = 3',5'-cyclic GMP + diphosphate. Its activity is regulated as follows. Activated by nitric oxide in the presence of magnesium or manganese ions. This Mus musculus (Mouse) protein is Guanylate cyclase soluble subunit alpha-1 (Gucy1a1).